Consider the following 80-residue polypeptide: Defensin-like protein 13 (80 aa).

An N-terminal signal peptide occupies residues 1-29; sequence MAKSATIVTLFFAALVFFAALEAPMVVEA. The residue at position 30 (Q30) is a Pyrrolidone carboxylic acid. Disulfide bonds link C33–C80, C44–C65, C50–C74, and C54–C76.

It belongs to the DEFL family. Forms oligomers in its native state. In terms of tissue distribution, expressed predominantly in siliques and dry seeds.

Its subcellular location is the secreted. Confers broad-spectrum resistance to pathogens. Possesses antifungal activity sensitive to inorganic cations in vitro. This Arabidopsis thaliana (Mouse-ear cress) protein is Defensin-like protein 13 (PDF1.1).